Consider the following 412-residue polypeptide: MDSKKYSTLKERFLRYVKFNTRSDDASETIPSTPSQMEFAKMLKKELEELGLSNIFINKACFVNATLPSNIDKKVATVGFIAHMDTADFNAEGISPQIVENYDGKDIVLNKEQNIVLKVEEFPNLKNYISKTLITTDGTTLLGADDKSGIVEIIEAVKYLKEHPEIKHGDIKIAFGPDEEIGRGADYFDVKEFAADYAYTMDGGPIGELEYESFNAAQAKFKIKGVSVHPGTAKGKMINASLIASEIIEMFPKDEVPEKTEGYEGFYFLDEMKSNCEEGEVVYIIRDHDKAKFLAKKEFVKELVEKVNKKYGREVVKLELKDEYYNMGEIIKDHMYVVDIAKQAMENLGIKPLIKAIRGGTDGSKISFMGLPTPNIFAGGENFHGKYEFVALESMEKATDVIVEIVKLNAER.

H83 provides a ligand contact to Zn(2+). The active site involves D85. D145 serves as a coordination point for Zn(2+). E179 acts as the Proton acceptor in catalysis. Zn(2+) contacts are provided by E180, D202, and H384.

Belongs to the peptidase M20B family. Zn(2+) is required as a cofactor.

Its subcellular location is the cytoplasm. It carries out the reaction Release of the N-terminal residue from a tripeptide.. In terms of biological role, cleaves the N-terminal amino acid of tripeptides. The chain is Peptidase T from Fusobacterium nucleatum subsp. nucleatum (strain ATCC 25586 / DSM 15643 / BCRC 10681 / CIP 101130 / JCM 8532 / KCTC 2640 / LMG 13131 / VPI 4355).